Reading from the N-terminus, the 20-residue chain is Sperm acrosome membrane-associated protein 3, processed form (20 aa).

The protein belongs to the glycosyl hydrolase 22 family.

Functionally, sperm surface membrane protein that may be involved in sperm-egg plasma membrane adhesion and fusion during fertilization. It could be a potential receptor for the egg oligosaccharide residue N-acetylglucosamine, which is present in the extracellular matrix over the egg plasma membrane. This is Sperm acrosome membrane-associated protein 3, processed form (SPACA3) from Vulpes vulpes (Red fox).